The sequence spans 287 residues: Gliotoxin thiomethyltransferase GtmA (287 aa).

S-adenosyl-L-methionine-binding residues include Thr27 and Ala54. Cys55 and Cys80 are disulfide-bonded. The S-adenosyl-L-methionine site is built by Asp82, Met87, Asn109, Ala110, Ala126, and Arg248.

The protein belongs to the class I-like SAM-binding methyltransferase superfamily.

The protein resides in the cytoplasm. The enzyme catalyses a thiol + S-adenosyl-L-methionine = a methyl thioether + S-adenosyl-L-homocysteine + H(+). In terms of biological role, S-methyltransferase that catalyzes the irreversible conversion of the secondary metabolite gliotoxin to bis(methylthio)gliotoxin (BmGT). Gliotoxin, a member of the epipolythiodioxopiperazine (ETP) class of toxins, is characterized by a disulfide bridged cyclic dipeptide. Its thiol groups are essential for bioactivity, as they conjugate to sulfur-containing proteins, disturb the intracellular redox equilibrium, and generate reactive oxygen species by cycling between reduced and oxidized states. The enzyme prevents self-intoxication of the fungus by irreversible conversion of the toxic gliotoxin to a biologically inactive bis-thiomethylated derivative. Appears to negatively regulate gliotoxin biosynthesis. In Aspergillus fumigatus (strain ATCC MYA-4609 / CBS 101355 / FGSC A1100 / Af293) (Neosartorya fumigata), this protein is Gliotoxin thiomethyltransferase GtmA.